The following is a 413-amino-acid chain: Serine hydroxymethyltransferase (413 aa).

Residues Leu119 and 123–125 (GHL) each bind (6S)-5,6,7,8-tetrahydrofolate. An N6-(pyridoxal phosphate)lysine modification is found at Lys228. 351 to 353 (SPF) lines the (6S)-5,6,7,8-tetrahydrofolate pocket.

Belongs to the SHMT family. Homodimer. Requires pyridoxal 5'-phosphate as cofactor.

The protein resides in the cytoplasm. The catalysed reaction is (6R)-5,10-methylene-5,6,7,8-tetrahydrofolate + glycine + H2O = (6S)-5,6,7,8-tetrahydrofolate + L-serine. Its pathway is one-carbon metabolism; tetrahydrofolate interconversion. It functions in the pathway amino-acid biosynthesis; glycine biosynthesis; glycine from L-serine: step 1/1. In terms of biological role, catalyzes the reversible interconversion of serine and glycine with tetrahydrofolate (THF) serving as the one-carbon carrier. This reaction serves as the major source of one-carbon groups required for the biosynthesis of purines, thymidylate, methionine, and other important biomolecules. Also exhibits THF-independent aldolase activity toward beta-hydroxyamino acids, producing glycine and aldehydes, via a retro-aldol mechanism. This chain is Serine hydroxymethyltransferase, found in Clostridium botulinum (strain Okra / Type B1).